We begin with the raw amino-acid sequence, 320 residues long: Olfactory receptor 51E2 (320 aa).

The Extracellular segment spans residues 1–27 (MSSCNFTHATFLLIGIPGLEEAHFWFG). Asn5 carries an N-linked (GlcNAc...) asparagine glycan. Residues 28 to 48 (FPLLSMYAVALFGNCIVVFIV) form a helical membrane-spanning segment. Residues 49 to 53 (RTERS) are Cytoplasmic-facing. A helical membrane pass occupies residues 54 to 74 (LHAPMYLFLCMLAAIDLALST). Over 75 to 98 (STMPKILALFWFDSREITFDACLA) the chain is Extracellular. Cysteines 96 and 178 form a disulfide. The chain crosses the membrane as a helical span at residues 99–119 (QMFFIHTLSAIESTILLAMAF). The Cytoplasmic segment spans residues 120 to 141 (DRYVAICHPLRHAAVLNNTVTV). The chain crosses the membrane as a helical span at residues 142 to 162 (QIGMVALVRGSLFFFPLPLLI). Topologically, residues 163 to 200 (KRLAFCHSNVLSHSYCVHQDVMKLAYTDTLPNVVYGLT) are extracellular. Residues 201 to 221 (AILLVMGVDVMFISLSYFLII) traverse the membrane as a helical segment. Residues 222 to 239 (RTVLQLPSKSERAKAFGT) are Cytoplasmic-facing. Residues 240–260 (CVSHISVVLAFYVPLIGLSVV) form a helical membrane-spanning segment. Residues 261 to 269 (HRFGNSLDP) are Extracellular-facing. A helical membrane pass occupies residues 270–290 (IVHVLMGDVYLLLPPVINPII). Over 291-320 (YGAKTKQIRTRVLAMFKISCDKDIEAGGNT) the chain is Cytoplasmic.

This sequence belongs to the G-protein coupled receptor 1 family. In brain, expressed in medulla oblongata by cells close to the fourth ventricle, in the area postrema, the nucleus tractus solitarius. Expressed in olfactory epithelium and vomeronasal organ. Expressed in kidney by large renal vessels, renal afferent arterioles, and extrarenal vascular beds. In small resistance vessels the expression is restricted to cells of the juxtaglomerular afferent arteriole, which mediate renin secretion. Also detected in small blood vessels in a variety of tissues including heart, diaphragm, skeletal muscle, and skin. In the heart, esophagus, and stomach it is detected in axons of autonomic neurons and neurons of the enteric plexus. Also detected in colon and liver. Expressed in the glomus cells of the carotid body.

It is found in the cell membrane. The protein localises to the early endosome membrane. In terms of biological role, olfactory receptor. The activity of this receptor is probably mediated by G-proteins which induce elevation of intracellular Ca(2+), cAMP and activation of phosphorylation of the protein kinases PKA and MAPK3/MAPK1. Activation of OR51E2 may affect melanocyte proliferation, differentiation, and melanogenesis and may increase proliferation and migration of primary retinal pigment epithelial (RPE) cells. Activated by the short chain fatty acids (SCFA), acetate and propionate. In response to SCFA, may positively regulate renin secretion and increase blood pressure. May also be activated by steroid hormones and regulate cell proliferation. Activated by L-lactate in glomus cells. This is Olfactory receptor 51E2 (Or51e2) from Mus musculus (Mouse).